A 440-amino-acid polypeptide reads, in one-letter code: L-seryl-tRNA(Sec) selenium transferase (440 aa).

Lys-282 bears the N6-(pyridoxal phosphate)lysine mark.

This sequence belongs to the SelA family. Requires pyridoxal 5'-phosphate as cofactor.

Its subcellular location is the cytoplasm. It carries out the reaction L-seryl-tRNA(Sec) + selenophosphate + H(+) = L-selenocysteinyl-tRNA(Sec) + phosphate. It participates in aminoacyl-tRNA biosynthesis; selenocysteinyl-tRNA(Sec) biosynthesis; selenocysteinyl-tRNA(Sec) from L-seryl-tRNA(Sec) (bacterial route): step 1/1. In terms of biological role, converts seryl-tRNA(Sec) to selenocysteinyl-tRNA(Sec) required for selenoprotein biosynthesis. The protein is L-seryl-tRNA(Sec) selenium transferase of Campylobacter jejuni subsp. doylei (strain ATCC BAA-1458 / RM4099 / 269.97).